Here is a 429-residue protein sequence, read N- to C-terminus: Bifunctional phosphoribosylaminoimidazole carboxylase/phosphoribosylaminoimidazole succinocarboxamide synthetase (429 aa).

Residues 7–264 (ASIEGYKLGK…WVAEQLADIV (258 aa)) are SAICAR synthetase. The interval 7 to 264 (ASIEGYKLGK…WVAEQLADIV (258 aa)) is SAICAR synthetase domain. Residues 265–429 (PKKDHLVVIL…DKELRGVRNA (165 aa)) form an AIR carboxylase region. The segment at 270-429 (LVVILMGSAS…DKELRGVRNA (160 aa)) is AIR carboxylase domain. Ser335 provides a ligand contact to CO2.

This sequence in the N-terminal section; belongs to the SAICAR synthetase family. In the C-terminal section; belongs to the AIR carboxylase family. Class II subfamily. As to quaternary structure, homooctamer.

It carries out the reaction 5-amino-1-(5-phospho-D-ribosyl)imidazole-4-carboxylate + L-aspartate + ATP = (2S)-2-[5-amino-1-(5-phospho-beta-D-ribosyl)imidazole-4-carboxamido]succinate + ADP + phosphate + 2 H(+). It catalyses the reaction 5-amino-1-(5-phospho-D-ribosyl)imidazole-4-carboxylate + H(+) = 5-amino-1-(5-phospho-beta-D-ribosyl)imidazole + CO2. It participates in purine metabolism; IMP biosynthesis via de novo pathway; 5-amino-1-(5-phospho-D-ribosyl)imidazole-4-carboxamide from 5-amino-1-(5-phospho-D-ribosyl)imidazole-4-carboxylate: step 1/2. It functions in the pathway purine metabolism; IMP biosynthesis via de novo pathway; 5-amino-1-(5-phospho-D-ribosyl)imidazole-4-carboxylate from 5-amino-1-(5-phospho-D-ribosyl)imidazole (carboxylase route): step 1/1. In terms of biological role, bifunctional phosphoribosylaminoimidazole carboxylase and phosphoribosylaminoimidazole succinocarboxamide synthetase catalyzing two reactions of the de novo purine biosynthetic pathway. This is Bifunctional phosphoribosylaminoimidazole carboxylase/phosphoribosylaminoimidazole succinocarboxamide synthetase from Drosophila melanogaster (Fruit fly).